A 120-amino-acid chain; its full sequence is UPF0344 protein lin2366 (120 aa).

Transmembrane regions (helical) follow at residues 3 to 23 (GYVHLISWVAIVVLTVTALLI), 33 to 53 (MLQMINRVFYILVILSGIMMV), 62 to 82 (ILAIFKILMGIIVIGVVEMLL), and 92 to 112 (GMFLMIFIIVVVITVSLGFYL).

This sequence belongs to the UPF0344 family.

Its subcellular location is the cell membrane. The sequence is that of UPF0344 protein lin2366 from Listeria innocua serovar 6a (strain ATCC BAA-680 / CLIP 11262).